Consider the following 156-residue polypeptide: Arginine repressor (156 aa).

Belongs to the ArgR family.

Its subcellular location is the cytoplasm. It participates in amino-acid biosynthesis; L-arginine biosynthesis [regulation]. In terms of biological role, regulates arginine biosynthesis genes. The chain is Arginine repressor from Aeromonas hydrophila subsp. hydrophila (strain ATCC 7966 / DSM 30187 / BCRC 13018 / CCUG 14551 / JCM 1027 / KCTC 2358 / NCIMB 9240 / NCTC 8049).